The primary structure comprises 622 residues: MSTDNKQSLPAITLAAIGVVYGDIGTSPLYTLRECLSGQFGFGLERDAVFGFLSLIFWLLIFVVSIKYLTFVMRADNAGEGGILTLMSLAGRNTSARTTSMLVIMGLIGGSFFYGEVVITPAISVMSAIEGLEIVAPQLDTWIVPLSIIVLTLLFMIQKHGTAMVGKLFAPIMLTWFLILAGLGLRSIIANPEVLHALNPMWAVHFFLEYKTVSFIALGAVVLSITGGEALYADMGHFGKFPIRLAWFTVVLPSLTLNYFGQGALLLKNPEAIKNPFFLLAPDWALIPLLIIAALATVIASQAVISGVFSLTRQAVRLGYLSPMRIIHTSEMESGQIYIPFVNWMLYVAVVIVIVSFEHSSNLAAAYGIAVTGTMVLTSILSTTVARQNWHWNKYFVALILIAFLCVDIPLFTANLDKLLSGGWLPLSLGTVMFIVMTTWKSERFRLLRRMHEHGNSLEAMIASLEKSPPVRVPGTAVYMSRAINVIPFALMHNLKHNKVLHERVILLTLRTEDAPYVHNVRRVQIEQLSPTFWRVVASYGWRETPNVEEVFHRCGLEGLSCRMMETSFFMSHESLILGKRPWYLRLRGKLYLLLQRNALRAPDQFEIPPNRVIELGTQVEI.

12 helical membrane passes run 9 to 29 (LPAI…TSPL), 49 to 69 (VFGF…IKYL), 103 to 123 (VIMG…TPAI), 137 to 157 (PQLD…LFMI), 165 to 185 (VGKL…GLGL), 213 to 233 (VSFI…ALYA), 247 to 267 (WFTV…ALLL), 276 to 296 (PFFL…AALA), 337 to 357 (IYIP…IVSF), 363 to 383 (LAAA…ILST), 396 to 416 (FVAL…TANL), and 419 to 439 (LLSG…VMTT).

It belongs to the HAK/KUP transporter (TC 2.A.72) family.

The protein localises to the cell inner membrane. It carries out the reaction K(+)(in) + H(+)(in) = K(+)(out) + H(+)(out). Its function is as follows. Responsible for the low-affinity transport of potassium into the cell. Likely operates as a K(+):H(+) symporter. This Shigella flexneri serotype 5b (strain 8401) protein is Low affinity potassium transport system protein Kup.